The following is a 377-amino-acid chain: Putative holocytochrome-c synthase (377 aa).

Disordered stretches follow at residues 1 to 29 (MTSS…SNEA) and 111 to 136 (QNSE…KPAG). The span at 7–22 (TTDHPRTGKCPIDHSK) shows a compositional bias: basic and acidic residues. HRM repeat units lie at residues 114-119 (EATPAV) and 124-129 (TCPMSN).

The protein belongs to the cytochrome c-type heme lyase family.

It is found in the mitochondrion inner membrane. It localises to the mitochondrion intermembrane space. The catalysed reaction is holo-[cytochrome c] = apo-[cytochrome c] + heme b. Functionally, lyase that catalyzes the covalent linking of the heme group to the cytochrome C apoprotein to produce the mature functional cytochrome. In Schizosaccharomyces pombe (strain 972 / ATCC 24843) (Fission yeast), this protein is Putative holocytochrome-c synthase.